Consider the following 139-residue polypeptide: Putative general secretion pathway protein B (139 aa).

Residues 28–48 traverse the membrane as a helical segment; the sequence is IIYVICLLLICLWFAGMVLVG. Residues 93–139 form a disordered region; it reads VEEEDDPGVAVENAPSSSEDEENTVEESEEKAGLRERVKNALNELER. Over residues 110-121 the composition is skewed to acidic residues; it reads SEDEENTVEESE. Over residues 122–139 the composition is skewed to basic and acidic residues; it reads EKAGLRERVKNALNELER.

The protein resides in the cell membrane. Its function is as follows. Part of a cryptic operon that encodes proteins involved in type II secretion pathway in other organisms, but is not expressed in strain K12 under standard laboratory conditions. May play a regulatory role under conditions of derepressed gsp gene expression. This Escherichia coli (strain K12) protein is Putative general secretion pathway protein B.